Consider the following 122-residue polypeptide: UPF0102 protein Cgl2031/cg2228 (122 aa).

The protein belongs to the UPF0102 family.

The protein is UPF0102 protein Cgl2031/cg2228 of Corynebacterium glutamicum (strain ATCC 13032 / DSM 20300 / JCM 1318 / BCRC 11384 / CCUG 27702 / LMG 3730 / NBRC 12168 / NCIMB 10025 / NRRL B-2784 / 534).